The primary structure comprises 229 residues: Flagellar L-ring protein (229 aa).

Residues Met-1–Ala-23 form the signal peptide. A lipid anchor (N-palmitoyl cysteine) is attached at Cys-24. Cys-24 carries S-diacylglycerol cysteine lipidation.

It belongs to the FlgH family. As to quaternary structure, the basal body constitutes a major portion of the flagellar organelle and consists of four rings (L,P,S, and M) mounted on a central rod.

The protein localises to the cell outer membrane. Its subcellular location is the bacterial flagellum basal body. Functionally, assembles around the rod to form the L-ring and probably protects the motor/basal body from shearing forces during rotation. The chain is Flagellar L-ring protein from Anaeromyxobacter dehalogenans (strain 2CP-C).